Here is a 353-residue protein sequence, read N- to C-terminus: Photosystem II protein D1 (353 aa).

N-acetylthreonine is present on Thr-2. Thr-2 bears the Phosphothreonine mark. 3 helical membrane passes run 29–46, 118–133, and 142–156; these read YIGW…TATS, HFLL…EWEL, and WIAV…AATA. Residue His-118 coordinates chlorophyll a. Residue Tyr-126 coordinates pheophytin a. Residues Asp-170 and Glu-189 each coordinate [CaMn4O5] cluster. A helical transmembrane segment spans residues 197–218; the sequence is FHMLGVAGVFGGSLFSAMHGSL. Position 198 (His-198) interacts with chlorophyll a. A quinone-binding positions include His-215 and 264 to 265; that span reads SF. A Fe cation-binding site is contributed by His-215. His-272 provides a ligand contact to Fe cation. Residues 274–288 form a helical membrane-spanning segment; sequence FLAAWPVVGIWFTAL. Residues His-332, Glu-333, Asp-342, and Ala-344 each coordinate [CaMn4O5] cluster. Positions 345–353 are excised as a propeptide; the sequence is AMEAPSVNG.

The protein belongs to the reaction center PufL/M/PsbA/D family. As to quaternary structure, PSII is composed of 1 copy each of membrane proteins PsbA, PsbB, PsbC, PsbD, PsbE, PsbF, PsbH, PsbI, PsbJ, PsbK, PsbL, PsbM, PsbT, PsbX, PsbY, PsbZ, Psb30/Ycf12, at least 3 peripheral proteins of the oxygen-evolving complex and a large number of cofactors. It forms dimeric complexes. Requires The D1/D2 heterodimer binds P680, chlorophylls that are the primary electron donor of PSII, and subsequent electron acceptors. It shares a non-heme iron and each subunit binds pheophytin, quinone, additional chlorophylls, carotenoids and lipids. D1 provides most of the ligands for the Mn4-Ca-O5 cluster of the oxygen-evolving complex (OEC). There is also a Cl(-1) ion associated with D1 and D2, which is required for oxygen evolution. The PSII complex binds additional chlorophylls, carotenoids and specific lipids. as cofactor. Post-translationally, tyr-161 forms a radical intermediate that is referred to as redox-active TyrZ, YZ or Y-Z. In terms of processing, C-terminally processed by CTPA; processing is essential to allow assembly of the oxygen-evolving complex and thus photosynthetic growth.

It localises to the plastid. The protein resides in the chloroplast thylakoid membrane. The enzyme catalyses 2 a plastoquinone + 4 hnu + 2 H2O = 2 a plastoquinol + O2. Its function is as follows. Photosystem II (PSII) is a light-driven water:plastoquinone oxidoreductase that uses light energy to abstract electrons from H(2)O, generating O(2) and a proton gradient subsequently used for ATP formation. It consists of a core antenna complex that captures photons, and an electron transfer chain that converts photonic excitation into a charge separation. The D1/D2 (PsbA/PsbD) reaction center heterodimer binds P680, the primary electron donor of PSII as well as several subsequent electron acceptors. The polypeptide is Photosystem II protein D1 (Phaseolus vulgaris (Kidney bean)).